Here is a 360-residue protein sequence, read N- to C-terminus: Peptide chain release factor 1 (360 aa).

Gln235 carries the N5-methylglutamine modification. Residues 281-310 (AERQRQDAAQAESRRLQVGSGDRSQRIRTY) form a disordered region.

The protein belongs to the prokaryotic/mitochondrial release factor family. Post-translationally, methylated by PrmC. Methylation increases the termination efficiency of RF1.

The protein localises to the cytoplasm. Functionally, peptide chain release factor 1 directs the termination of translation in response to the peptide chain termination codons UAG and UAA. This Stenotrophomonas maltophilia (strain R551-3) protein is Peptide chain release factor 1.